We begin with the raw amino-acid sequence, 221 residues long: Probable GTP-binding protein EngB (221 aa).

Residues 23 to 211 (PLREVAFAGR…DNLIIKWLFE (189 aa)) enclose the EngB-type G domain. Residues S38 and T60 each contribute to the Mg(2+) site.

Belongs to the TRAFAC class TrmE-Era-EngA-EngB-Septin-like GTPase superfamily. EngB GTPase family. It depends on Mg(2+) as a cofactor.

Necessary for normal cell division and for the maintenance of normal septation. The polypeptide is Probable GTP-binding protein EngB (Polynucleobacter asymbioticus (strain DSM 18221 / CIP 109841 / QLW-P1DMWA-1) (Polynucleobacter necessarius subsp. asymbioticus)).